The sequence spans 109 residues: Guanylate cyclase activator 2B (109 aa).

An N-terminal signal peptide occupies residues 1–23 (MKVLALPVAVAAMLLVLAQNTQS). Positions 24–94 (VYIQYEGFQV…NIFRALRSIS (71 aa)) are excised as a propeptide. 3 cysteine pairs are disulfide-bonded: cysteine 65/cysteine 78, cysteine 98/cysteine 106, and cysteine 101/cysteine 109.

The protein belongs to the guanylin family. Small and large intestine and atria and ventricles of heart. Both uroguanylin and prouroguanylin are found in plasma.

It localises to the secreted. Endogenous activator of intestinal guanylate cyclase. It stimulates this enzyme through the same receptor binding region as the heat-stable enterotoxins. May be a potent physiological regulator of intestinal fluid and electrolyte transport. May be an autocrine/paracrine regulator of intestinal salt and water transport. The protein is Guanylate cyclase activator 2B (GUCA2B) of Didelphis virginiana (North American opossum).